We begin with the raw amino-acid sequence, 245 residues long: MLIIPAIDLKDGACVRLRQGRMEDSTVFSDDPVAMAAKWVDGGCRRLHLVDLNGAFEGQPVNGDVVTAIAKRYPNLPIQIGGGIRSLETIEHYIKAGVSYVIIGTKAVKDPEFVAQACRAFPGKVIVGLDAKDGFVATDGWAEVSTVQVIDLAKRFEADGVSAIVYTDIAKDGMMQGCNIPFTAALAAATRIPVIASGGIHNLGDIQALLNAKAPGIIGAITGRAIYEGTLDVAEAQALCDREQR.

The Proton acceptor role is filled by D8. The active-site Proton donor is D130.

Belongs to the HisA/HisF family.

It localises to the cytoplasm. It catalyses the reaction 1-(5-phospho-beta-D-ribosyl)-5-[(5-phospho-beta-D-ribosylamino)methylideneamino]imidazole-4-carboxamide = 5-[(5-phospho-1-deoxy-D-ribulos-1-ylimino)methylamino]-1-(5-phospho-beta-D-ribosyl)imidazole-4-carboxamide. The protein operates within amino-acid biosynthesis; L-histidine biosynthesis; L-histidine from 5-phospho-alpha-D-ribose 1-diphosphate: step 4/9. In Pseudomonas syringae pv. tomato (strain ATCC BAA-871 / DC3000), this protein is 1-(5-phosphoribosyl)-5-[(5-phosphoribosylamino)methylideneamino] imidazole-4-carboxamide isomerase.